The following is a 153-amino-acid chain: Natriuretic peptides A (153 aa).

Positions 1 to 25 are cleaved as a signal peptide; it reads MGPFSTITVSFLFCLAFWHPDQIGA. 2 propeptides span residues 26–123 and 93–103; these read NPVY…TAPR and DGEALGRSTWE. Positions 54-101 are disordered; sequence EDEAVPPQALSEQSDEAGAALSPLPEVPPWTGEVSPAQRDGEALGRST. Ser129 is modified (phosphoserine). Cys130 and Cys146 are oxidised to a cystine. The important for degradation of atrial natriuretic peptide by IDE stretch occupies residues 147–151; sequence NSFRY.

Belongs to the natriuretic peptide family. As to quaternary structure, homodimer; disulfide-linked antiparallel dimer. Post-translationally, the precursor molecule is proteolytically cleaved by CORIN at Arg-123 to produce the atrial natriuretic peptide. Undergoes further proteolytic cleavage by unknown proteases to give rise to long-acting natriuretic peptide, vessel dilator and kaliuretic peptide. Additional processing gives rise to the auriculin and atriopeptin peptides. In the kidneys, alternative processing by an unknown protease results in the peptide urodilatin. In terms of processing, cleavage by MME initiates degradation of the factor and thereby regulates its activity. Degradation by IDE results in reduced activation of NPR1 (in vitro). During IDE degradation, the resulting products can temporarily stimulate NPR2 to produce cGMP, before the fragments are completely degraded and inactivated by IDE (in vitro). Degraded by IDE. Post-translationally, phosphorylation on Ser-129 decreases vasorelaxant activity.

The protein localises to the secreted. The protein resides in the perikaryon. It is found in the cell projection. Its function is as follows. Hormone that plays a key role in mediating cardio-renal homeostasis, and is involved in vascular remodeling and regulating energy metabolism. Acts by specifically binding and stimulating NPR1 to produce cGMP, which in turn activates effector proteins, such as PRKG1, that drive various biological responses. Regulates vasodilation, natriuresis, diuresis and aldosterone synthesis and is therefore essential for regulating blood pressure, controlling the extracellular fluid volume and maintaining the fluid-electrolyte balance. Also involved in inhibiting cardiac remodeling and cardiac hypertrophy by inducing cardiomyocyte apoptosis and attenuating the growth of cardiomyocytes and fibroblasts. Plays a role in female pregnancy by promoting trophoblast invasion and spiral artery remodeling in uterus, and thus prevents pregnancy-induced hypertension. In adipose tissue, acts in various cGMP- and PKG-dependent pathways to regulate lipid metabolism and energy homeostasis. This includes up-regulating lipid metabolism and mitochondrial oxygen utilization by activating the AMP-activated protein kinase (AMPK), and increasing energy expenditure by acting via MAPK11 to promote the UCP1-dependent thermogenesis of brown adipose tissue. Binds the clearance receptor NPR3 which removes the hormone from circulation. May have a role in cardio-renal homeostasis through regulation of natriuresis, diuresis, vasodilation, and inhibiting aldosterone synthesis. In vitro, promotes the production of cGMP and induces vasodilation. May promote natriuresis, at least in part, by enhancing prostaglandin E2 synthesis resulting in the inhibition of renal Na+-K+-ATPase. However reports on the involvement of this peptide in mammal blood volume and blood pressure homeostasis are conflicting; according to a report, in vivo it is not sufficient to activate cGMP and does not inhibit collecting duct transport nor effect diuresis and natriuresis. Appears to bind to specific receptors that are distinct from the receptors bound by atrial natriuretic peptide and vessel dilator. Possibly enhances protein excretion in urine by decreasing proximal tubular protein reabsorption. Functionally, may have a role in cardio-renal homeostasis through regulation of natriuresis, diuresis, and vasodilation. In vitro, promotes the production of cGMP and induces vasodilation. May promote natriuresis, at least in part, by enhancing prostaglandin E2 synthesis resulting in the inhibition of renal Na+-K+-ATPase. However reports on the involvement of this peptide in mammal blood volume and blood pressure homeostasis are conflicting; according to a report it is not sufficient to activate cGMP and does not inhibit collecting duct transport nor effect diuresis and natriuresis. Appears to bind to specific receptors that are distinct from the receptors bound by the atrial natriuretic and long-acting natriuretic peptides. Possibly functions in protein excretion in urine by maintaining the integrity of the proximal tubules and enhancing protein excretion by decreasing proximal tubular protein reabsorption. In terms of biological role, may have a role in cardio-renal homeostasis through regulation of diuresis and inhibiting aldosterone synthesis. In vitro, promotes the production of cGMP and induces vasodilation. May promote natriuresis, at least in part, by enhancing prostaglandin E2 synthesis resulting in the inhibition of renal Na+-K+-ATPase. May have a role in potassium excretion but not sodium excretion (natriuresis). Possibly enhances protein excretion in urine by decreasing proximal tubular protein reabsorption. Its function is as follows. Hormone produced in the kidneys that appears to be important for maintaining cardio-renal homeostasis. Mediates vasodilation, natriuresis and diuresis primarily in the renal system, in order to maintain the extracellular fluid volume and control the fluid-electrolyte balance. Specifically binds and stimulates cGMP production by renal transmembrane receptors, likely NPR1. Urodilatin not ANP, may be the natriuretic peptide responsible for the regulation of sodium and water homeostasis in the kidney. May have a role in cardio-renal homeostasis through regulation of natriuresis and vasodilation. In vivo promotes natriuresis and in vitro, vasodilates renal artery strips. Functionally, may have a role in cardio-renal homeostasis through regulation of regulation of natriuresis and vasodilation. In vivo promotes natriuresis. In vitro, vasodilates intestinal smooth muscle but not smooth muscle strips. In terms of biological role, may have a role in cardio-renal homeostasis through regulation of natriuresis and vasodilation. In vivo promotes natriuresis. In vitro, selectively vasodilates intestinal and vascular smooth muscle strips. Its function is as follows. May have a role in cardio-renal homeostasis through regulation of natriuresis and vasodilation. In vivo promotes natriuresis. In vitro, selectively vasodilates intestinal smooth muscle but not vascular smooth muscle strips. The protein is Natriuretic peptides A (NPPA) of Oryctolagus cuniculus (Rabbit).